The sequence spans 497 residues: Protein nucleotidyltransferase YdiU (497 aa).

Residues Gly88, Gly90, Arg91, Lys110, Asp122, Gly123, Arg173, and Arg180 each contribute to the ATP site. The active-site Proton acceptor is the Asp249. Mg(2+) contacts are provided by Asn250 and Asp259. Residue Asp259 participates in ATP binding.

It belongs to the SELO family. It depends on Mg(2+) as a cofactor. The cofactor is Mn(2+).

It catalyses the reaction L-seryl-[protein] + ATP = 3-O-(5'-adenylyl)-L-seryl-[protein] + diphosphate. It carries out the reaction L-threonyl-[protein] + ATP = 3-O-(5'-adenylyl)-L-threonyl-[protein] + diphosphate. The catalysed reaction is L-tyrosyl-[protein] + ATP = O-(5'-adenylyl)-L-tyrosyl-[protein] + diphosphate. The enzyme catalyses L-histidyl-[protein] + UTP = N(tele)-(5'-uridylyl)-L-histidyl-[protein] + diphosphate. It catalyses the reaction L-seryl-[protein] + UTP = O-(5'-uridylyl)-L-seryl-[protein] + diphosphate. It carries out the reaction L-tyrosyl-[protein] + UTP = O-(5'-uridylyl)-L-tyrosyl-[protein] + diphosphate. Its function is as follows. Nucleotidyltransferase involved in the post-translational modification of proteins. It can catalyze the addition of adenosine monophosphate (AMP) or uridine monophosphate (UMP) to a protein, resulting in modifications known as AMPylation and UMPylation. This is Protein nucleotidyltransferase YdiU from Methylorubrum extorquens (strain CM4 / NCIMB 13688) (Methylobacterium extorquens).